The primary structure comprises 204 residues: Thymidine kinase (204 aa).

ATP contacts are provided by residues 23–30 (GSMFSGKT) and 95–98 (DEAQ). The active-site Proton acceptor is the Glu-96. Residues Cys-152, Cys-155, Cys-184, and Cys-187 each coordinate Zn(2+).

It belongs to the thymidine kinase family. Homotetramer.

It is found in the cytoplasm. The enzyme catalyses thymidine + ATP = dTMP + ADP + H(+). The polypeptide is Thymidine kinase (Porphyromonas gingivalis (strain ATCC 33277 / DSM 20709 / CIP 103683 / JCM 12257 / NCTC 11834 / 2561)).